We begin with the raw amino-acid sequence, 33 residues long: MNLEVVVQLGSLSLIVLAGPIIVLLLASQKGNL.

Residues 5 to 25 traverse the membrane as a helical segment; that stretch reads VVVQLGSLSLIVLAGPIIVLL.

Belongs to the Psb30/Ycf12 family. PSII is composed of 1 copy each of membrane proteins PsbA, PsbB, PsbC, PsbD, PsbE, PsbF, PsbH, PsbI, PsbJ, PsbK, PsbL, PsbM, PsbT, PsbX, PsbY, PsbZ, Psb30/Ycf12, peripheral proteins of the oxygen-evolving complex and a large number of cofactors. It forms dimeric complexes.

It is found in the plastid. The protein localises to the chloroplast thylakoid membrane. Functionally, a core subunit of photosystem II (PSII), probably helps stabilize the reaction center. In Mesostigma viride (Green alga), this protein is Photosystem II reaction center protein Psb30.